The following is a 509-amino-acid chain: MSHVTGVTSNIRIKKTIDDIWPLTAKRVLVRVDFNVPIQNGHITNDYRIRATIPTIQRIIDQGGICILLSHLGRPAGISMTTAVRDVRRRYHEAHFHDNKGKTAFFSVLPPEEKIKILAQSSLREEATHIMPGVKSGKTILFARLPEDEKKQLLMQYLDEKKDNGLPQLSVSAGYEEQYSLRPVAVRLAELLGQHVYFAHDCMDAKMELSRLKRGNVMLLENVRFYREEDSKKEEEREAMAKVLASYGDIFVSDAFGTAHRDSATMTGIPKVLGHGAAGYLMEKEISYFSKVLGNPPRPLVAIVGGSKVSDKIQLLDNMLQRIDYLLIGGAMAYTFLKAQGHRIGTSMCEEDRLDLARSLLKKAEDRKVQVLLPVDHVCHTEFKAVDTPVVTADADIPDGHMALDIGPKTIANYVETIGKCKSAIWNGPMGVFEMTPYSKGTFAVAKAMGDCTQKNGLMSIIGGGDSASAAEQSGEATRMSHVSTGGGASLELLEGKTLPGVAILDDKE.

(2R)-3-phosphoglycerate is bound by residues Val32, Asp33, Phe34, Asn35, Arg48, Ser70, His71, Gly73, Arg74, Arg224, His260, and Arg261. Position 306 (Gly306) interacts with ADP. Gly306 serves as a coordination point for CDP. Lys308 contacts (2R)-3-phosphoglycerate. Lys308 provides a ligand contact to AMP. Asp311 contacts CDP. A Mg(2+)-binding site is contributed by Asp311. Positions 312 and 330 each coordinate ADP. AMP is bound at residue Lys312. Residue Lys312 coordinates ATP. Residue Gly330 participates in CDP binding. 2 residues coordinate AMP: Ala331 and Ala403. Ala331 and Ala403 together coordinate ATP. Ala403 and Asn427 together coordinate ADP. Positions 428 and 433 each coordinate CDP. ADP contacts are provided by Phe433, Glu434, Asp466, and Ser467. Residue Glu434 coordinates AMP. The ATP site is built by Glu434, Asp466, and Ser467. Asp466 contacts Mg(2+).

This sequence belongs to the phosphoglycerate kinase family. In terms of assembly, monomer. The cofactor is Mg(2+).

Its subcellular location is the glycosome. The catalysed reaction is (2R)-3-phosphoglycerate + ATP = (2R)-3-phospho-glyceroyl phosphate + ADP. It participates in carbohydrate degradation; glycolysis; pyruvate from D-glyceraldehyde 3-phosphate: step 2/5. In Trypanosoma congolense, this protein is Phosphoglycerate kinase, glycosomal (56PGK).